A 325-amino-acid polypeptide reads, in one-letter code: Tetraacyldisaccharide 4'-kinase (325 aa).

Position 55–62 (55–62 (TAGGNGKT)) interacts with ATP.

It belongs to the LpxK family.

The catalysed reaction is a lipid A disaccharide + ATP = a lipid IVA + ADP + H(+). It functions in the pathway glycolipid biosynthesis; lipid IV(A) biosynthesis; lipid IV(A) from (3R)-3-hydroxytetradecanoyl-[acyl-carrier-protein] and UDP-N-acetyl-alpha-D-glucosamine: step 6/6. In terms of biological role, transfers the gamma-phosphate of ATP to the 4'-position of a tetraacyldisaccharide 1-phosphate intermediate (termed DS-1-P) to form tetraacyldisaccharide 1,4'-bis-phosphate (lipid IVA). This is Tetraacyldisaccharide 4'-kinase from Salmonella heidelberg (strain SL476).